The following is a 2390-amino-acid chain: Spectrin beta chain, non-erythrocytic 2 (2390 aa).

An N-acetylserine modification is found at Ser-2. The actin-binding stretch occupies residues 2–278 (SSTLSPTDFD…IITYVATYYH (277 aa)). Phosphoserine is present on residues Ser-6 and Ser-31. Calponin-homology (CH) domains follow at residues 57 to 161 (AVQK…LRFQ) and 176 to 281 (KSAK…HYFS). Spectrin repeat units follow at residues 306–414 (LVEK…LALR), 427–527 (AARF…RERL), 532–639 (ELQK…RLEE), 642–744 (RLWR…QRLA), 749–849 (LYQF…RALE), and 855–954 (YTML…KAAL). Ser-959 carries the post-translational modification Phosphoserine. 11 Spectrin repeats span residues 960 to 1063 (IQNY…SLGE), 1066 to 1169 (RLQD…GRLA), 1174 to 1262 (FQGF…RHKK), 1279 to 1379 (EQQH…ARSL), 1384 to 1485 (RAEL…RRLQ), 1489 to 1586 (EQHQ…RLED), 1589 to 1692 (RAQQ…RLQE), 1696 to 1797 (LCQL…GQVL), 1801 to 1904 (YELQ…QLLL), 1910 to 2010 (FRFF…DWLQ), and 2017 to 2076 (VFGR…EKLT). Ser-1073 bears the Phosphoserine mark. The span at 2081 to 2096 (REKERKRKREEEERRK) shows a compositional bias: basic and acidic residues. Disordered regions lie at residues 2081-2222 (REKE…EQME) and 2331-2390 (SSAS…KKNK). The span at 2116-2125 (QTASDTTWDG) shows a compositional bias: polar residues. A phosphoserine mark is found at Ser-2171 and Ser-2199. The PH domain occupies 2218-2328 (QEQMEGMLCR…WLRVVNAAIA (111 aa)). Thr-2354 bears the Phosphothreonine mark. A Phosphoserine modification is found at Ser-2359. Residues 2370–2383 (RSKDGREREREKRF) are compositionally biased toward basic and acidic residues.

The protein belongs to the spectrin family. As to expression, highly expressed in brain, kidney, pancreas, and liver, and at lower levels in lung and placenta.

Its subcellular location is the cytoplasm. The protein resides in the cytoskeleton. It is found in the cell cortex. Functionally, probably plays an important role in neuronal membrane skeleton. The sequence is that of Spectrin beta chain, non-erythrocytic 2 (SPTBN2) from Homo sapiens (Human).